A 125-amino-acid chain; its full sequence is Cytochrome c' (125 aa).

Residues Arg10, Glu67, Cys116, Cys119, and His120 each coordinate heme c.

Homodimer. Post-translationally, binds 1 heme c group covalently per subunit.

In terms of biological role, cytochrome c' is the most widely occurring bacterial c-type cytochrome. Cytochromes c' are high-spin proteins and the heme has no sixth ligand. Their exact function is not known. The protein is Cytochrome c' of Pararhodospirillum photometricum (Rhodospirillum photometricum).